The chain runs to 845 residues: Poly(A) RNA polymerase gld-4 (845 aa).

The disordered stretch occupies residues 1–55; the sequence is MNEDSRLSSSQQPSTSTPRSSIPSTMNSDEPNTCRRLSQSQEQPSTSRTCKSETP. Low complexity predominate over residues 7-25; sequence LSSSQQPSTSTPRSSIPST. A compositionally biased stretch (polar residues) spans 26–49; it reads MNSDEPNTCRRLSQSQEQPSTSRT. Residues Asp139 and Asp141 each coordinate Mg(2+). A PAP-associated domain is found at 276-335; sequence NLGHLLLRFLELYSLEFNFEEMGISPGQCCYIPKSASGARYGHKQAQPGNLALEDPLLTA. The segment covering 482–506 has biased composition (basic and acidic residues); it reads KSLEKMPACDDNKKEEELVATRETD. Disordered regions lie at residues 482-733 and 788-845; these read KSLE…SEEP and NALT…RLQR. Positions 535 to 551 are enriched in low complexity; sequence TSTQSVNTSATVSTAAS. Polar residues-rich tracts occupy residues 561–571 and 579–588; these read PGLSSSMGNQS and GINNRNNSAV. Residues 605 to 620 show a composition bias toward basic and acidic residues; that stretch reads RESKRTQTTSEDKMQD. A compositionally biased stretch (basic residues) spans 643 to 653; that stretch reads SHKHRNAHPQR. Composition is skewed to polar residues over residues 654-666, 695-732, 788-805, and 819-828; these read QRPS…QGSD, RQQT…SSEE, NALT…TSMQ, and DNNSATSSTD.

Interacts with gls-1 isoform C. It depends on Mg(2+) as a cofactor. Requires Mn(2+) as cofactor. In terms of tissue distribution, germline-specific.

It localises to the cytoplasm. It is found in the cytoplasmic granule. The protein localises to the perinuclear region. It carries out the reaction RNA(n) + ATP = RNA(n)-3'-adenine ribonucleotide + diphosphate. Its function is as follows. Cytoplasmic poly(A) RNA polymerase that adds successive AMP monomers to the 3'-end of specific RNAs, forming a poly(A) tail. The enzymatic activity is enhanced by its interaction with gls-1. Required, together with gld-2, for early meiotic progression in male and female germ cells and for gld-1 protein accumulation in the hermaphrodite germline. In the germline, forms a complex with gls-1 which directly binds to gld-1 mRNA and prevents its degradation. The sequence is that of Poly(A) RNA polymerase gld-4 from Caenorhabditis elegans.